The sequence spans 226 residues: ATP synthase F(0) complex subunit a (226 aa).

Helical transmembrane passes span Ile10–Ile30, Trp68–Leu88, Gln97–Phe117, Ile138–Val158, Ile164–Ile184, and Ala189–Ile209.

The protein belongs to the ATPase A chain family. Component of the ATP synthase complex composed at least of ATP5F1A/subunit alpha, ATP5F1B/subunit beta, ATP5MC1/subunit c (homooctomer), MT-ATP6/subunit a, MT-ATP8/subunit 8, ATP5ME/subunit e, ATP5MF/subunit f, ATP5MG/subunit g, ATP5MK/subunit k, ATP5MJ/subunit j, ATP5F1C/subunit gamma, ATP5F1D/subunit delta, ATP5F1E/subunit epsilon, ATP5PF/subunit F6, ATP5PB/subunit b, ATP5PD/subunit d, ATP5PO/subunit OSCP. ATP synthase complex consists of a soluble F(1) head domain (subunits alpha(3) and beta(3)) - the catalytic core - and a membrane F(0) domain - the membrane proton channel (subunits c, a, 8, e, f, g, k and j). These two domains are linked by a central stalk (subunits gamma, delta, and epsilon) rotating inside the F1 region and a stationary peripheral stalk (subunits F6, b, d, and OSCP). Interacts with DNAJC30; interaction is direct.

Its subcellular location is the mitochondrion inner membrane. The enzyme catalyses H(+)(in) = H(+)(out). Functionally, subunit a, of the mitochondrial membrane ATP synthase complex (F(1)F(0) ATP synthase or Complex V) that produces ATP from ADP in the presence of a proton gradient across the membrane which is generated by electron transport complexes of the respiratory chain. ATP synthase complex consist of a soluble F(1) head domain - the catalytic core - and a membrane F(1) domain - the membrane proton channel. These two domains are linked by a central stalk rotating inside the F(1) region and a stationary peripheral stalk. During catalysis, ATP synthesis in the catalytic domain of F(1) is coupled via a rotary mechanism of the central stalk subunits to proton translocation. With the subunit c (ATP5MC1), forms the proton-conducting channel in the F(0) domain, that contains two crucial half-channels (inlet and outlet) that facilitate proton movement from the mitochondrial intermembrane space (IMS) into the matrix. Protons are taken up via the inlet half-channel and released through the outlet half-channel, following a Grotthuss mechanism. The chain is ATP synthase F(0) complex subunit a from Cricetulus griseus (Chinese hamster).